Reading from the N-terminus, the 160-residue chain is uncharacterized protein (160 aa).

This sequence belongs to the Dps family.

This is an uncharacterized protein from Haemophilus influenzae (strain ATCC 51907 / DSM 11121 / KW20 / Rd).